A 715-amino-acid polypeptide reads, in one-letter code: Glycine--tRNA ligase beta subunit (715 aa).

Belongs to the class-II aminoacyl-tRNA synthetase family. As to quaternary structure, tetramer of two alpha and two beta subunits.

It is found in the cytoplasm. The enzyme catalyses tRNA(Gly) + glycine + ATP = glycyl-tRNA(Gly) + AMP + diphosphate. The polypeptide is Glycine--tRNA ligase beta subunit (Nitrosomonas europaea (strain ATCC 19718 / CIP 103999 / KCTC 2705 / NBRC 14298)).